The sequence spans 524 residues: Vang-like protein 1 (524 aa).

The span at 1 to 15 (MDTESTYSGYSYYSS) shows a compositional bias: low complexity. The segment at 1–85 (MDTESTYSGY…TTAITGTSEH (85 aa)) is disordered. Topologically, residues 1–117 (MDTESTYSGY…KRYLGLTVAS (117 aa)) are cytoplasmic. Residues 73–85 (GETTTAITGTSEH) are compositionally biased toward polar residues. A phosphoserine mark is found at S86 and S88. A helical transmembrane segment spans residues 118 to 138 (FLGLLVFLTPIAFILLPPILW). Topologically, residues 139–151 (RDELEPCGTICEG) are extracellular. The chain crosses the membrane as a helical span at residues 152-172 (LFISMAFKLLILLIGTWALFF). The Cytoplasmic portion of the chain corresponds to 173 to 182 (RKRRADMPRV). The helical transmembrane segment at 183–203 (FVFRALLLVLIFLFVVSYWLF) threads the bilayer. Topologically, residues 204–222 (YGVRILDSRDRNYQGIVQY) are extracellular. A helical membrane pass occupies residues 223 to 243 (AVSLVDALLFIHYLAIVLLEL). Residues 244-524 (RQLQPMFTLQ…VLRLQSETSV (281 aa)) lie on the Cytoplasmic side of the membrane.

The protein belongs to the Vang family. In terms of assembly, heterodimer with VANGL2. Interacts through its C-terminal region with the N-terminal half of DVL1, DVL2 and DVL3. The PDZ domain of DVL1, DVL2 and DVL3 is required for the interaction. As to expression, according to PubMed:11956595, ubiquitously expressed. According to PubMed:12011995, expressed specifically in testis and ovary.

Its subcellular location is the cell membrane. The sequence is that of Vang-like protein 1 (VANGL1) from Homo sapiens (Human).